The following is a 181-amino-acid chain: Translation initiation factor IF-3 (181 aa).

The protein belongs to the IF-3 family. Monomer.

The protein localises to the cytoplasm. IF-3 binds to the 30S ribosomal subunit and shifts the equilibrium between 70S ribosomes and their 50S and 30S subunits in favor of the free subunits, thus enhancing the availability of 30S subunits on which protein synthesis initiation begins. In Mycoplasma mycoides subsp. mycoides SC (strain CCUG 32753 / NCTC 10114 / PG1), this protein is Translation initiation factor IF-3.